A 270-amino-acid polypeptide reads, in one-letter code: Orotidine 5'-phosphate decarboxylase (270 aa).

Substrate-binding positions include aspartate 41, 63 to 65 (KTH), 95 to 104 (DRKFADIGNT), tyrosine 221, and arginine 239. Lysine 97 serves as the catalytic Proton donor.

It belongs to the OMP decarboxylase family.

It carries out the reaction orotidine 5'-phosphate + H(+) = UMP + CO2. Its pathway is pyrimidine metabolism; UMP biosynthesis via de novo pathway; UMP from orotate: step 2/2. The polypeptide is Orotidine 5'-phosphate decarboxylase (URA3) (Candida boidinii (Yeast)).